The following is a 137-amino-acid chain: Hydrogenase-4 component J (137 aa).

To E.coli HycH.

In terms of biological role, possible component of hydrogenase 4. The protein is Hydrogenase-4 component J of Escherichia coli (strain K12).